The chain runs to 326 residues: Flap endonuclease 1 (326 aa).

The N-domain stretch occupies residues 1-100 (MGNADLRSLA…DEVEKRREQR (100 aa)). Positions 28, 82, 154, 156, 175, 177, and 225 each coordinate Mg(2+). The I-domain stretch occupies residues 118-246 (RVAKLDSRTQ…TAVKDLHEHG (129 aa)). Positions 318 to 326 (VQTGLDRWA) are interaction with PCNA.

The protein belongs to the XPG/RAD2 endonuclease family. FEN1 subfamily. In terms of assembly, interacts with PCNA. PCNA stimulates the nuclease activity without altering cleavage specificity. Mg(2+) serves as cofactor.

Functionally, structure-specific nuclease with 5'-flap endonuclease and 5'-3' exonuclease activities involved in DNA replication and repair. During DNA replication, cleaves the 5'-overhanging flap structure that is generated by displacement synthesis when DNA polymerase encounters the 5'-end of a downstream Okazaki fragment. Binds the unpaired 3'-DNA end and kinks the DNA to facilitate 5' cleavage specificity. Cleaves one nucleotide into the double-stranded DNA from the junction in flap DNA, leaving a nick for ligation. Also involved in the base excision repair (BER) pathway. Acts as a genome stabilization factor that prevents flaps from equilibrating into structures that lead to duplications and deletions. Also possesses 5'-3' exonuclease activity on nicked or gapped double-stranded DNA. The polypeptide is Flap endonuclease 1 (Haloarcula marismortui (strain ATCC 43049 / DSM 3752 / JCM 8966 / VKM B-1809) (Halobacterium marismortui)).